A 394-amino-acid polypeptide reads, in one-letter code: NAD(P)H-quinone oxidoreductase subunit H 2 (394 aa).

Belongs to the complex I 49 kDa subunit family. In terms of assembly, NDH-1 can be composed of about 15 different subunits; different subcomplexes with different compositions have been identified which probably have different functions.

The protein resides in the cell inner membrane. The enzyme catalyses a plastoquinone + NADH + (n+1) H(+)(in) = a plastoquinol + NAD(+) + n H(+)(out). It catalyses the reaction a plastoquinone + NADPH + (n+1) H(+)(in) = a plastoquinol + NADP(+) + n H(+)(out). Functionally, NDH-1 shuttles electrons from an unknown electron donor, via FMN and iron-sulfur (Fe-S) centers, to quinones in the respiratory and/or the photosynthetic chain. The immediate electron acceptor for the enzyme in this species is believed to be plastoquinone. Couples the redox reaction to proton translocation, and thus conserves the redox energy in a proton gradient. Cyanobacterial NDH-1 also plays a role in inorganic carbon-concentration. The chain is NAD(P)H-quinone oxidoreductase subunit H 2 from Gloeobacter violaceus (strain ATCC 29082 / PCC 7421).